Reading from the N-terminus, the 654-residue chain is WD repeat-containing protein 70 (654 aa).

Disordered stretches follow at residues 1 to 26 and 43 to 175; these read MERS…VTMG and FEQT…DSHE. Basic and acidic residues predominate over residues 45–78; it reads QTRRTAVERSRKTLEAREKEEEMNREKELRRQNE. Positions 99–111 are enriched in low complexity; the sequence is RDTSSSESEQSSD. A compositionally biased stretch (acidic residues) spans 147–164; sequence NEEEEEAEEEEEEEEEEE. Positions 165–175 are enriched in basic and acidic residues; it reads NPVHKIPDSHE. WD repeat units lie at residues 180 to 219, 227 to 268, 281 to 321, 330 to 369, 376 to 415, 421 to 466, and 469 to 508; these read HGTK…ASFK, CECH…ECIK, GHTA…KQKS, GKKV…HPKF, DSGT…KPLF, PTMF…RVYE, and ITDA…QRGA. Lysine 296 is covalently cross-linked (Glycyl lysine isopeptide (Lys-Gly) (interchain with G-Cter in SUMO2)). Position 452 is an N6-acetyllysine (lysine 452). Positions 540–565 are enriched in basic and acidic residues; sequence REPRQRSTRKQLEKDRLDPLKSHKPE. The tract at residues 540 to 579 is disordered; the sequence is REPRQRSTRKQLEKDRLDPLKSHKPEPPVAGPGRGGRVGT. Threonine 579 is subject to Phosphothreonine. Glycyl lysine isopeptide (Lys-Gly) (interchain with G-Cter in SUMO2) cross-links involve residues lysine 590 and lysine 596. Phosphoserine is present on residues serine 621 and serine 638. Residues 630 to 654 form a disordered region; that stretch reads KTMFAQVESDDEEAKNEPEWKKRKI. A compositionally biased stretch (basic and acidic residues) spans 644–654; it reads KNEPEWKKRKI.

This sequence belongs to the WD repeat GAD-1 family.

The protein is WD repeat-containing protein 70 (WDR70) of Homo sapiens (Human).